The primary structure comprises 266 residues: Thymidylate synthase (266 aa).

Residue Arg24 coordinates dUMP. Residue His54 coordinates (6R)-5,10-methylene-5,6,7,8-tetrahydrofolate. Residue 129–130 (RR) coordinates dUMP. Cys149 serves as the catalytic Nucleophile. DUMP is bound by residues 169–172 (RSAD), Asn180, and 210–212 (HIY). (6R)-5,10-methylene-5,6,7,8-tetrahydrofolate is bound at residue Asp172. (6R)-5,10-methylene-5,6,7,8-tetrahydrofolate is bound at residue Ala265.

Belongs to the thymidylate synthase family. Bacterial-type ThyA subfamily. Homodimer.

It is found in the cytoplasm. It catalyses the reaction dUMP + (6R)-5,10-methylene-5,6,7,8-tetrahydrofolate = 7,8-dihydrofolate + dTMP. Its pathway is pyrimidine metabolism; dTTP biosynthesis. In terms of biological role, catalyzes the reductive methylation of 2'-deoxyuridine-5'-monophosphate (dUMP) to 2'-deoxythymidine-5'-monophosphate (dTMP) while utilizing 5,10-methylenetetrahydrofolate (mTHF) as the methyl donor and reductant in the reaction, yielding dihydrofolate (DHF) as a by-product. This enzymatic reaction provides an intracellular de novo source of dTMP, an essential precursor for DNA biosynthesis. The sequence is that of Thymidylate synthase from Corynebacterium glutamicum (strain R).